We begin with the raw amino-acid sequence, 365 residues long: tRNA(Met) cytidine acetate ligase (365 aa).

ATP-binding positions include 7–20 (IAEF…HKYL), Gly96, Asn152, and Arg175.

It belongs to the TmcAL family.

The protein localises to the cytoplasm. The catalysed reaction is cytidine(34) in elongator tRNA(Met) + acetate + ATP = N(4)-acetylcytidine(34) in elongator tRNA(Met) + AMP + diphosphate. Functionally, catalyzes the formation of N(4)-acetylcytidine (ac(4)C) at the wobble position of elongator tRNA(Met), using acetate and ATP as substrates. First activates an acetate ion to form acetyladenylate (Ac-AMP) and then transfers the acetyl group to tRNA to form ac(4)C34. This chain is tRNA(Met) cytidine acetate ligase, found in Streptococcus pneumoniae (strain 70585).